A 533-amino-acid polypeptide reads, in one-letter code: Trigger factor (533 aa).

A PPIase FKBP-type domain is found at 164 to 249 (GDQLIIDFTG…VKQVKVETDT (86 aa)). The segment at 436-533 (EAAIEAEAEE…APAKKPAAKK (98 aa)) is disordered. Over residues 465 to 477 (AAAKKAPAKKAPA) the composition is skewed to basic residues. Residues 481-490 (AAKDGDEKPA) are compositionally biased toward basic and acidic residues. Composition is skewed to basic residues over residues 494-506 (APAK…KAST) and 515-533 (PAKK…AAKK).

This sequence belongs to the FKBP-type PPIase family. Tig subfamily.

Its subcellular location is the cytoplasm. It catalyses the reaction [protein]-peptidylproline (omega=180) = [protein]-peptidylproline (omega=0). Involved in protein export. Acts as a chaperone by maintaining the newly synthesized protein in an open conformation. Functions as a peptidyl-prolyl cis-trans isomerase. The sequence is that of Trigger factor from Erythrobacter litoralis (strain HTCC2594).